We begin with the raw amino-acid sequence, 260 residues long: CD40 ligand (260 aa).

Over 1–22 (MIETYSQTAPRSVATGPPVSMK) the chain is Cytoplasmic. A helical; Signal-anchor for type II membrane protein transmembrane segment spans residues 23–46 (IFMYLLTVFLITQMIGSALFAVYL). The Extracellular segment spans residues 47–260 (HRRLDKIEDE…GFTSFGLLKL (214 aa)). Residues 121-260 (IAAHVISEAS…GFTSFGLLKL (140 aa)) enclose the THD domain. A disulfide bond links cysteine 177 and cysteine 217. An N-linked (GlcNAc...) asparagine glycan is attached at asparagine 239.

The protein belongs to the tumor necrosis factor family. Homotrimer. Interacts with CD28. CD40 ligand, soluble form: Exists as either a monomer or a homotrimer. Forms a ternary complex between CD40 and integrins for CD40-CD40LG signaling. Post-translationally, the soluble form derives from the membrane form by proteolytic processing.

It is found in the cell membrane. It localises to the cell surface. Its subcellular location is the secreted. In terms of biological role, cytokine that acts as a ligand to CD40/TNFRSF5. Costimulates T-cell proliferation and cytokine production. Its cross-linking on T-cells generates a costimulatory signal which enhances the production of IL4 and IL10 in conjunction with the TCR/CD3 ligation and CD28 costimulation. Induces the activation of NF-kappa-B. Induces the activation of kinases MAPK8 and PAK2 in T-cells. Mediates B-cell proliferation in the absence of co-stimulus as well as IgE production in the presence of IL4. Involved in immunoglobulin class switching. Acts as a ligand for integrins, specifically ITGA5:ITGB1 and ITGAV:ITGB3; both integrins and the CD40 receptor are required for activation of CD40-CD40LG signaling, which have cell-type dependent effects, such as B-cell activation, NF-kappa-B signaling and anti-apoptotic signaling. The sequence is that of CD40 ligand (CD40LG) from Canis lupus familiaris (Dog).